The following is a 135-amino-acid chain: Histone H2B.4 (135 aa).

Basic and acidic residues-rich tracts occupy residues 1-12 (MAPKAAEKKPVE) and 23-35 (EKKV…GGEK). The segment at 1–43 (MAPKAAEKKPVEKTPAVKKPKAEKKVPTSKEGGEKKGKKKSKK) is disordered. N6-acetyllysine occurs at positions 8 and 24. Lysine 131 is covalently cross-linked (Glycyl lysine isopeptide (Lys-Gly) (interchain with G-Cter in ubiquitin)).

This sequence belongs to the histone H2B family. In terms of assembly, the nucleosome is a histone octamer containing two molecules each of H2A, H2B, H3 and H4 assembled in one H3-H4 heterotetramer and two H2A-H2B heterodimers. The octamer wraps approximately 147 bp of DNA. Post-translationally, can be acetylated to form H2BK6ac and H2BK33ac. In terms of processing, monoubiquitinated to form H2BK143ub1; may give a specific tag for epigenetic transcriptional activation. Expressed preferentially in meristematic tissues.

Its subcellular location is the nucleus. The protein resides in the chromosome. Its function is as follows. Core component of nucleosome. Nucleosomes wrap and compact DNA into chromatin, limiting DNA accessibility to the cellular machineries which require DNA as a template. Histones thereby play a central role in transcription regulation, DNA repair, DNA replication and chromosomal stability. DNA accessibility is regulated via a complex set of post-translational modifications of histones, also called histone code, and nucleosome remodeling. The chain is Histone H2B.4 (TH153) from Triticum aestivum (Wheat).